Reading from the N-terminus, the 271-residue chain is 4-diphosphocytidyl-2-C-methyl-D-erythritol kinase (271 aa).

K17 is a catalytic residue. 97-107 (PVGSGLGGGSS) contributes to the ATP binding site. D137 is an active-site residue.

The protein belongs to the GHMP kinase family. IspE subfamily.

It catalyses the reaction 4-CDP-2-C-methyl-D-erythritol + ATP = 4-CDP-2-C-methyl-D-erythritol 2-phosphate + ADP + H(+). It functions in the pathway isoprenoid biosynthesis; isopentenyl diphosphate biosynthesis via DXP pathway; isopentenyl diphosphate from 1-deoxy-D-xylulose 5-phosphate: step 3/6. In terms of biological role, catalyzes the phosphorylation of the position 2 hydroxy group of 4-diphosphocytidyl-2C-methyl-D-erythritol. The chain is 4-diphosphocytidyl-2-C-methyl-D-erythritol kinase from Thermotoga maritima (strain ATCC 43589 / DSM 3109 / JCM 10099 / NBRC 100826 / MSB8).